A 181-amino-acid chain; its full sequence is Large ribosomal subunit protein uL6 (181 aa).

It belongs to the universal ribosomal protein uL6 family. In terms of assembly, part of the 50S ribosomal subunit.

In terms of biological role, this protein binds to the 23S rRNA, and is important in its secondary structure. It is located near the subunit interface in the base of the L7/L12 stalk, and near the tRNA binding site of the peptidyltransferase center. The polypeptide is Large ribosomal subunit protein uL6 (Vesicomyosocius okutanii subsp. Calyptogena okutanii (strain HA)).